Consider the following 318-residue polypeptide: Methionyl-tRNA formyltransferase (318 aa).

Ser-112–Pro-115 contacts (6S)-5,6,7,8-tetrahydrofolate.

The protein belongs to the Fmt family.

It catalyses the reaction L-methionyl-tRNA(fMet) + (6R)-10-formyltetrahydrofolate = N-formyl-L-methionyl-tRNA(fMet) + (6S)-5,6,7,8-tetrahydrofolate + H(+). In terms of biological role, attaches a formyl group to the free amino group of methionyl-tRNA(fMet). The formyl group appears to play a dual role in the initiator identity of N-formylmethionyl-tRNA by promoting its recognition by IF2 and preventing the misappropriation of this tRNA by the elongation apparatus. The polypeptide is Methionyl-tRNA formyltransferase (Haemophilus influenzae (strain ATCC 51907 / DSM 11121 / KW20 / Rd)).